The primary structure comprises 391 residues: B2 bradykinin receptor (391 aa).

At 1-60 (MFSPWKISMFLSVREDSVPTTASFSADMLNVTLQGPTLNGTFAQSKCPQVEWLGWLNTIQ) the chain is on the extracellular side. N-linked (GlcNAc...) asparagine glycans are attached at residues Asn30 and Asn39. Residues 61 to 84 (PPFLWVLFVLATLENIFVLSVFCL) traverse the membrane as a helical segment. At 85 to 93 (HKSSCTVAE) the chain is on the cytoplasmic side. Residues 94–118 (IYLGNLAAADLILACGLPFWAITIS) form a helical membrane-spanning segment. The Extracellular portion of the chain corresponds to 119–131 (NNFDWLFGETLCR). A disulfide bridge connects residues Cys130 and Cys211. The helical transmembrane segment at 132 to 153 (VVNAIISMNLYSSICFLMLVSI) threads the bilayer. The Cytoplasmic segment spans residues 154 to 175 (DRYLALVKTMSMGRMRGVRWAK). The residue at position 156 (Tyr156) is a Phosphotyrosine. Residues 176 to 198 (LYSLVIWGCTLLLSSPMLVFRTM) form a helical membrane-spanning segment. Residues 199-221 (KEYSDEGHNVTACVISYPSLIWE) lie on the Extracellular side of the membrane. An N-linked (GlcNAc...) asparagine glycan is attached at Asn207. Residues 222-248 (VFTNMLLNVVGFLLPLSVITFCTMQIM) form a helical membrane-spanning segment. The Cytoplasmic portion of the chain corresponds to 249 to 267 (QVLRNNEMQKFKEIQTERR). A helical transmembrane segment spans residues 268 to 292 (ATVLVLVVLLLFIICWLPFQISTFL). Residues 293–311 (DTLHRLGILSSCQDERIID) lie on the Extracellular side of the membrane. A helical transmembrane segment spans residues 312 to 335 (VITQIASFMAYSNSCLNPLVYVIV). Residues 336–391 (GKRFRKKSWEVYQGVCQKGGCRSEPIQMENSMGTLRTSISVERQIHKLQDWAGSRQ) are Cytoplasmic-facing. Tyr347 is modified (phosphotyrosine). Cys351 is lipidated: S-palmitoyl cysteine. At Ser366 the chain carries Phosphoserine. Thr369 is modified (phosphothreonine). Phosphoserine; by GRK6 occurs at positions 373 and 375.

This sequence belongs to the G-protein coupled receptor 1 family. Bradykinin receptor subfamily. BDKRB2 sub-subfamily. In terms of assembly, forms a complex with PECAM1 and GNAQ. Interacts with PECAM1. As to expression, ubiquitous. Widespread in normal smooth muscle tissue and neurons.

The protein resides in the cell membrane. In terms of biological role, receptor for bradykinin. It is associated with G proteins that activate a phosphatidylinositol-calcium second messenger system. In Homo sapiens (Human), this protein is B2 bradykinin receptor (BDKRB2).